The primary structure comprises 256 residues: Probable ATP-dependent transporter slr0075 (256 aa).

The ABC transporter domain occupies 6–250 (LSIKNLTASV…EEKGYDFLDE (245 aa)). 38-45 (GRNGSGKS) lines the ATP pocket.

The protein belongs to the ABC transporter superfamily. Ycf16 family.

This chain is Probable ATP-dependent transporter slr0075, found in Synechocystis sp. (strain ATCC 27184 / PCC 6803 / Kazusa).